A 987-amino-acid polypeptide reads, in one-letter code: VPS35 endosomal protein sorting factor-like (987 aa).

Low complexity predominate over residues 1-23 (MAERQSASSPTPSSPPQQQQQTP). Residues 1 to 115 (MAERQSASSP…DPLNNPLEKK (115 aa)) are disordered. The span at 43 to 63 (NGREVERHPLNSITKTEDTGK) shows a compositional bias: basic and acidic residues. Over residues 66–111 (QSSLSSNASSLQSAAAAASSSTATTDIDPLNNNNNNNTDIDPLNNP) the composition is skewed to low complexity.

Belongs to the VPS35L family. As to quaternary structure, component of the heterotrimeric retriever complex.

It is found in the endosome. In terms of biological role, acts as a component of the retriever complex. The retriever complex is a heterotrimeric complex related to retromer cargo-selective complex (CSC) and essential for retromer-independent retrieval and recycling of numerous cargos. The chain is VPS35 endosomal protein sorting factor-like from Dictyostelium discoideum (Social amoeba).